The following is a 360-amino-acid chain: Peptide chain release factor 1 (360 aa).

An N5-methylglutamine modification is found at glutamine 235. The segment covering 285-308 (KRQEAEASERRNLLGSGDRSDRNR) has biased composition (basic and acidic residues). The tract at residues 285-313 (KRQEAEASERRNLLGSGDRSDRNRTYNFP) is disordered.

It belongs to the prokaryotic/mitochondrial release factor family. Methylated by PrmC. Methylation increases the termination efficiency of RF1.

It is found in the cytoplasm. Peptide chain release factor 1 directs the termination of translation in response to the peptide chain termination codons UAG and UAA. The sequence is that of Peptide chain release factor 1 from Photorhabdus laumondii subsp. laumondii (strain DSM 15139 / CIP 105565 / TT01) (Photorhabdus luminescens subsp. laumondii).